The chain runs to 525 residues: Asparagine synthetase [glutamine-hydrolyzing] (525 aa).

The active-site For GATase activity is the C2. One can recognise a Glutamine amidotransferase type-2 domain in the interval 2 to 185; it reads CGILAVLGCS…PGHLYSSKEG (184 aa). Residues 50–54, 75–77, and D98 contribute to the L-glutamine site; these read RLAII and NGE. The 325-residue stretch at 193–517 folds into the Asparagine synthetase domain; sequence PPWFSEVIPS…QIDSPWRSKC (325 aa). ATP contacts are provided by residues L231, V267, and 341–342; that span reads SG.

The enzyme catalyses L-aspartate + L-glutamine + ATP + H2O = L-asparagine + L-glutamate + AMP + diphosphate + H(+). The protein operates within amino-acid biosynthesis; L-asparagine biosynthesis; L-asparagine from L-aspartate (L-Gln route): step 1/1. Its function is as follows. Could play a role in remobilization of nitrogen in flowers during senescence. The chain is Asparagine synthetase [glutamine-hydrolyzing] (AND1) from Sandersonia aurantiaca (Christmas-bells).